The primary structure comprises 359 residues: Probable isoaspartyl peptidase/L-asparaginase 3 (359 aa).

T224 serves as the catalytic Nucleophile. Substrate-binding positions include 252–255 (RVGD) and 275–278 (TGDG).

Belongs to the Ntn-hydrolase family. Heterotetramer of two alpha and two beta chains arranged as a dimer of alpha/beta heterodimers. Cleaved into an alpha and beta chain by autocatalysis; this activates the enzyme. The N-terminal residue of the beta subunit is responsible for the nucleophile hydrolase activity.

The catalysed reaction is Cleavage of a beta-linked Asp residue from the N-terminus of a polypeptide.. Functionally, acts in asparagine catabolism but also in the final steps of protein degradation via hydrolysis of a range of isoaspartyl dipeptides. In Arabidopsis thaliana (Mouse-ear cress), this protein is Probable isoaspartyl peptidase/L-asparaginase 3.